The chain runs to 506 residues: Histidine ammonia-lyase (506 aa).

A cross-link (5-imidazolinone (Ala-Gly)) is located at residues A143–G145. The residue at position 144 (S144) is a 2,3-didehydroalanine (Ser).

It belongs to the PAL/histidase family. Post-translationally, contains an active site 4-methylidene-imidazol-5-one (MIO), which is formed autocatalytically by cyclization and dehydration of residues Ala-Ser-Gly.

The protein resides in the cytoplasm. The catalysed reaction is L-histidine = trans-urocanate + NH4(+). It functions in the pathway amino-acid degradation; L-histidine degradation into L-glutamate; N-formimidoyl-L-glutamate from L-histidine: step 1/3. The protein is Histidine ammonia-lyase of Salmonella typhimurium (strain LT2 / SGSC1412 / ATCC 700720).